Reading from the N-terminus, the 109-residue chain is UPF0122 protein ABC2295 (109 aa).

The protein belongs to the UPF0122 family.

Functionally, might take part in the signal recognition particle (SRP) pathway. This is inferred from the conservation of its genetic proximity to ftsY/ffh. May be a regulatory protein. This chain is UPF0122 protein ABC2295, found in Shouchella clausii (strain KSM-K16) (Alkalihalobacillus clausii).